Reading from the N-terminus, the 559-residue chain is WD repeat-containing protein JIP5 (559 aa).

WD repeat units lie at residues 26–67 (QYSD…NYLQ), 77–116 (ADGK…WKTK), 117–156 (RHKG…VVKK), 162–201 (DNGG…ETNR), 207–247 (NGDD…ESDF), 265–306 (DQED…LEDQ), 313–347 (AKEE…DIKK), 354–394 (RNHS…SEEE), and 428–470 (DSDG…SDDE). 2 disordered regions span residues 386-500 (SRNE…LIGL) and 515-559 (EESE…FEGL). Residues 391 to 417 (SEEEDDEESESFSDSDSDSDSDSDSDS) are compositionally biased toward acidic residues. Positions 418–428 (DSDRDRDRDSD) are enriched in basic and acidic residues. The segment covering 482–494 (DMDDIDEGSDSSE) has biased composition (acidic residues). Over residues 520-534 (EGEKLQKKRKNEPSK) the composition is skewed to basic and acidic residues. Over residues 535–544 (KNTKNLKKVK) the composition is skewed to basic residues.

This sequence belongs to the WD repeat WDR55 family.

It is found in the nucleus. Its subcellular location is the nucleolus. This is WD repeat-containing protein JIP5 (JIP5) from Vanderwaltozyma polyspora (strain ATCC 22028 / DSM 70294 / BCRC 21397 / CBS 2163 / NBRC 10782 / NRRL Y-8283 / UCD 57-17) (Kluyveromyces polysporus).